We begin with the raw amino-acid sequence, 395 residues long: Phosphoglycerate kinase (395 aa).

Residues 21–23 (DFN), arginine 36, 59–62 (HLGR), arginine 120, and arginine 153 contribute to the substrate site. ATP contacts are provided by residues lysine 203, glutamate 325, and 351-354 (GGDS).

It belongs to the phosphoglycerate kinase family. As to quaternary structure, monomer.

The protein resides in the cytoplasm. It catalyses the reaction (2R)-3-phosphoglycerate + ATP = (2R)-3-phospho-glyceroyl phosphate + ADP. Its pathway is carbohydrate degradation; glycolysis; pyruvate from D-glyceraldehyde 3-phosphate: step 2/5. The chain is Phosphoglycerate kinase from Roseiflexus castenholzii (strain DSM 13941 / HLO8).